The primary structure comprises 346 residues: [LysW]-lysine/[LysW]-ornithine hydrolase (346 aa).

Histidine 68 is a binding site for Zn(2+). Aspartate 70 is a catalytic residue. Aspartate 92 is a Zn(2+) binding site. Glutamate 122 acts as the Proton acceptor in catalysis. Glutamate 123, glutamate 146, and histidine 317 together coordinate Zn(2+).

The protein belongs to the peptidase M20A family. LysK subfamily. The cofactor is Zn(2+). Co(2+) serves as cofactor.

It localises to the cytoplasm. It carries out the reaction [amino-group carrier protein]-C-terminal-gamma-(L-lysyl)-L-glutamate + H2O = [amino-group carrier protein]-C-terminal-L-glutamate + L-lysine. The enzyme catalyses [amino-group carrier protein]-C-terminal-gamma-(L-ornithyl)-L-glutamate + H2O = [amino-group carrier protein]-C-terminal-L-glutamate + L-ornithine. Its pathway is amino-acid biosynthesis; L-lysine biosynthesis via AAA pathway; L-lysine from L-alpha-aminoadipate (Thermus route): step 5/5. It functions in the pathway amino-acid biosynthesis; L-arginine biosynthesis. Catalyzes the release of L-lysine from [LysW]-gamma-L-lysine and the release of L-ornithine from [LysW]-L-ornithine. The polypeptide is [LysW]-lysine/[LysW]-ornithine hydrolase (Saccharolobus solfataricus (strain ATCC 35092 / DSM 1617 / JCM 11322 / P2) (Sulfolobus solfataricus)).